A 222-amino-acid polypeptide reads, in one-letter code: DnaJ homolog subfamily B member 9 (222 aa).

The N-terminal stretch at 1–23 is a signal peptide; the sequence is MATPQSVFVFAICILMITELILA. The J domain maps to 26–90; the sequence is NYYDILGVPK…NRRKEYDIIG (65 aa). A divergent targeting domain region spans residues 91-222; sequence HSAFTNGKGQ…VTTYTDCSGQ (132 aa). Ser133 is subject to Phosphoserine.

Interacts with HSPA5/BiP; interaction is direct. Interacts with ERN1/IRE1 (via the luminal region). Interacts with DERL1.

Its subcellular location is the endoplasmic reticulum lumen. Functionally, co-chaperone for Hsp70 protein HSPA5/BiP that acts as a key repressor of the ERN1/IRE1-mediated unfolded protein response (UPR). J domain-containing co-chaperones stimulate the ATPase activity of Hsp70 proteins and are required for efficient substrate recognition by Hsp70 proteins. In the unstressed endoplasmic reticulum, interacts with the luminal region of ERN1/IRE1 and selectively recruits HSPA5/BiP: HSPA5/BiP disrupts the dimerization of the active ERN1/IRE1 luminal region, thereby inactivating ERN1/IRE1. Also involved in endoplasmic reticulum-associated degradation (ERAD) of misfolded proteins. Required for survival of B-cell progenitors and normal antibody production. The sequence is that of DnaJ homolog subfamily B member 9 from Rattus norvegicus (Rat).